Here is a 484-residue protein sequence, read N- to C-terminus: Glycogen synthase (484 aa).

ADP-alpha-D-glucose is bound at residue K15.

It belongs to the glycosyltransferase 1 family. Bacterial/plant glycogen synthase subfamily.

It carries out the reaction [(1-&gt;4)-alpha-D-glucosyl](n) + ADP-alpha-D-glucose = [(1-&gt;4)-alpha-D-glucosyl](n+1) + ADP + H(+). Its pathway is glycan biosynthesis; glycogen biosynthesis. Functionally, synthesizes alpha-1,4-glucan chains using ADP-glucose. The sequence is that of Glycogen synthase from Anoxybacillus flavithermus (strain DSM 21510 / WK1).